The sequence spans 769 residues: Subtilisin-like protease 3 (769 aa).

Residues N68, N102, N108, N295, N316, and N356 are each glycosylated (N-linked (GlcNAc...) asparagine). Residues 293 to 302 (KINHSNKHKN) show a composition bias toward basic residues. The tract at residues 293 to 329 (KINHSNKHKNNNNNNNNNDYHNNNKSNYHSHSSAKCQ) is disordered. The segment covering 303–325 (NNNNNNNNDYHNNNKSNYHSHSS) has biased composition (low complexity). The Peptidase S8 domain occupies 345–756 (GYDIIQMEEG…GGFINVYDLV (412 aa)). The active-site Charge relay system is the D372. The interval 468–493 (NIKSSDNIKSSDNINSSDNIKSSDNN) is disordered. 2 N-linked (GlcNAc...) asparagine glycosylation sites follow: N482 and N515. Residue H523 is the Charge relay system of the active site. N584 and N616 each carry an N-linked (GlcNAc...) asparagine glycan. S701 (charge relay system) is an active-site residue. The N-linked (GlcNAc...) asparagine glycan is linked to N720.

It belongs to the peptidase S8 family.

Its subcellular location is the secreted. The enzyme catalyses Hydrolysis of proteins with broad specificity for peptide bonds, and a preference for a large uncharged residue in P1. Hydrolyzes peptide amides.. Its function is as follows. Serine protease which may cleave PFN/profilin. The polypeptide is Subtilisin-like protease 3 (Plasmodium falciparum (isolate 3D7)).